The primary structure comprises 614 residues: Vitamin B12 transporter BtuB (614 aa).

Residues 1 to 20 (MIKKASLLTACSVTAFSAWA) form the signal peptide. Positions 26–33 (DTLVVTAN) match the TonB box motif. One can recognise a TBDR plug domain in the interval 38-152 (PRSTVLAPTT…IGGVVNIITT (115 aa)). Cyanocob(III)alamin is bound by residues leucine 83, serine 85, asparagine 92, and 110 to 111 (VS). The region spanning 155–614 (HPGTEISAGW…EYTLSGSYTF (460 aa)) is the TBDR beta-barrel domain. The next 3 beta stranded transmembrane spans lie at 158-165 (TEISAGWG), 169-178 (YQNYDVSTQQ), and 184-195 (TRVTLLGDYAHT). Positions 199, 211, 213, and 215 each coordinate Ca(2+). A run of 2 beta stranded transmembrane segments spans residues 217 to 227 (FLSKTLYGALE) and 232 to 248 (DVWS…NRTN). Ca(2+)-binding residues include tyrosine 249 and aspartate 250. Alanine 251 is a cyanocob(III)alamin binding site. Aspartate 261 contributes to the Ca(2+) binding site. The next 14 membrane-spanning stretches (beta stranded) occupy residues 263 to 277 (RKLY…LRYN), 279 to 296 (ELIK…KDYN), 309 to 325 (TLDE…NNII), 328 to 337 (HGNIGAGVDW), 353 to 369 (YDQR…QQVG), 371 to 381 (FTFEGAGRSDD), 385 to 400 (FGRH…WEFI), 403 to 417 (YRFI…KAPN), 434 to 443 (KSKQWEGAFE), 449 to 458 (VNWRISGYRN), 473 to 490 (YYNE…TANF), 494 to 509 (PLTH…ARNA), 517 to 529 (RRAK…QLDW), and 535 to 550 (DWGI…YDKD). Threonine 309 contacts cyanocob(III)alamin. Position 517 (arginine 517) interacts with cyanocob(III)alamin. Tyrosine 551 contributes to the cyanocob(III)alamin binding site. 3 consecutive transmembrane segments (beta stranded) span residues 558 to 572 (TVKM…LAVA), 585 to 596 (IANLFDKDYETV), and 602 to 614 (AGRE…SYTF). Positions 597–614 (YGYQTAGREYTLSGSYTF) match the TonB C-terminal box motif.

The protein belongs to the TonB-dependent receptor family. BtuB (TC 1.B.14.3.1) subfamily.

It localises to the cell outer membrane. Functionally, involved in the active translocation of vitamin B12 (cyanocobalamin) across the outer membrane to the periplasmic space. It derives its energy for transport by interacting with the trans-periplasmic membrane protein TonB. The chain is Vitamin B12 transporter BtuB from Escherichia coli O1:K1 / APEC.